Consider the following 464-residue polypeptide: GTPase Der (464 aa).

EngA-type G domains are found at residues 3-166 and 177-350; these read PTIA…AVES and LKMA…QAAT. GTP contacts are provided by residues 9–16, 56–60, 118–121, 183–190, 230–234, and 295–298; these read GRPNVGKS, DTGGI, NKVD, DTAGV, and NKWD. In terms of domain architecture, KH-like spans 351 to 435; the sequence is EKYSTSFLTR…PVRIEYRSGD (85 aa).

It belongs to the TRAFAC class TrmE-Era-EngA-EngB-Septin-like GTPase superfamily. EngA (Der) GTPase family. As to quaternary structure, associates with the 50S ribosomal subunit.

Its function is as follows. GTPase that plays an essential role in the late steps of ribosome biogenesis. This chain is GTPase Der, found in Teredinibacter turnerae (strain ATCC 39867 / T7901).